We begin with the raw amino-acid sequence, 525 residues long: MATHDLTNALDALSVTQHKHAINGIKRGIERESLRIKSDGVISAQKHPEGVGSALTNGQITTDFSESLLEFITPVSESSTQTLQQLKDLQKFTLEKMGDELLWPISMPCFIEHQDDIVIAQFGSSNVGQMKTLYREGLKNRYGSMMQAIAGVHFNISFPDSLWQSLHTLKNSDLSLEDFISDGYLALIRNFKRELWLISYLFGASPALCSSFLQGRKTDLPFKKLGKGTLYLEVGTALRLGNLGYTNSAQSSLRVMYNSLDEYVAGLKKSINTPSDIYGNLDDYTSENPKQLNKNILQIENEFYSPIRPKRNAKNGETPTDALLRAGIEYVEIRALDVNPFSEVGIDIEQFHFLDVFLTYCLLKSSPAMDWEEQTRSTENLDTVVNKGREKGLELNYFNQPRTLQSWGEDIFSQLSEVAKYMDTAYGVSYYSSTIERMATWINNPGLTYSGRYVAELEASGLDNGHYALAIAEKYKQSHQAADYQVFSKQWLEEQVTRSNDAQRAIEQSDSVSFTAFLNAYFDPK.

This sequence belongs to the glutamate--cysteine ligase type 1 family. Type 1 subfamily.

The catalysed reaction is L-cysteine + L-glutamate + ATP = gamma-L-glutamyl-L-cysteine + ADP + phosphate + H(+). The protein operates within sulfur metabolism; glutathione biosynthesis; glutathione from L-cysteine and L-glutamate: step 1/2. This chain is Glutamate--cysteine ligase, found in Pseudoalteromonas translucida (strain TAC 125).